A 143-amino-acid polypeptide reads, in one-letter code: Large ribosomal subunit protein uL15 (143 aa).

The disordered stretch occupies residues 1-45 (MLLNTVQPGVGAKHAKRRVGRGIGSGLGKTCGRGHKGQKSRAGGF). The segment covering 21–31 (RGIGSGLGKTC) has biased composition (gly residues).

Belongs to the universal ribosomal protein uL15 family. Part of the 50S ribosomal subunit.

In terms of biological role, binds to the 23S rRNA. This is Large ribosomal subunit protein uL15 from Chromobacterium violaceum (strain ATCC 12472 / DSM 30191 / JCM 1249 / CCUG 213 / NBRC 12614 / NCIMB 9131 / NCTC 9757 / MK).